The primary structure comprises 83 residues: Cobrotoxin (83 aa).

Residues methionine 1–threonine 21 form the signal peptide. 4 disulfide bridges follow: cysteine 24/cysteine 45, cysteine 38/cysteine 62, cysteine 64/cysteine 75, and cysteine 76/cysteine 81.

Belongs to the three-finger toxin family. Short-chain subfamily. Type I alpha-neurotoxin sub-subfamily. As to expression, expressed by the venom gland.

It is found in the secreted. Its function is as follows. Binds to muscle nicotinic acetylcholine receptor (nAChR) and inhibit acetylcholine from binding to the receptor, thereby impairing neuromuscular transmission. Has a higher toxicity than cobrotoxin-b. In vivo, when tested on rat arthritis models, shows anti-inflammation and immunosuppression effects. This Naja atra (Chinese cobra) protein is Cobrotoxin.